A 712-amino-acid polypeptide reads, in one-letter code: Polyribonucleotide nucleotidyltransferase (712 aa).

The Mg(2+) site is built by Asp-487 and Asp-493. In terms of domain architecture, KH spans 554-613 (PKIITMTINPDKIRDVIGPSGKQINKIIEETGVKIDIEQDGTVFISSINQEMNDKAKKII). The region spanning 623 to 691 (GEIYEGKVKR…KQGRVNLSRK (69 aa)) is the S1 motif domain.

This sequence belongs to the polyribonucleotide nucleotidyltransferase family. The cofactor is Mg(2+).

It is found in the cytoplasm. It carries out the reaction RNA(n+1) + phosphate = RNA(n) + a ribonucleoside 5'-diphosphate. Its function is as follows. Involved in mRNA degradation. Catalyzes the phosphorolysis of single-stranded polyribonucleotides processively in the 3'- to 5'-direction. This chain is Polyribonucleotide nucleotidyltransferase, found in Bacillus cereus (strain AH820).